The primary structure comprises 287 residues: Cysteine-rich repeat secretory protein 58 (287 aa).

The first 20 residues, 1-20 (METTKKLFALLCLFVTMNQA), serve as a signal peptide directing secretion. Topologically, residues 21-267 (ISVSDPDDME…GSFSHRGNNK (247 aa)) are extracellular. Gnk2-homologous domains are found at residues 28-130 (DMET…DKFF) and 135-246 (ETNP…TYNS). 9 N-linked (GlcNAc...) asparagine glycosylation sites follow: N39, N43, N59, N68, N89, N99, N107, N208, and N245. A helical membrane pass occupies residues 268-286 (LLGGMVLAVSVSVFAFLSL). A topological domain (cytoplasmic) is located at residue V287.

This sequence belongs to the cysteine-rich repeat secretory protein family.

It is found in the membrane. The chain is Cysteine-rich repeat secretory protein 58 (CRRSP58) from Arabidopsis thaliana (Mouse-ear cress).